Here is an 89-residue protein sequence, read N- to C-terminus: ATP synthase subunit c, sodium ion specific (89 aa).

2 helical membrane passes run 9–29 (VVLA…IGPG) and 68–88 (GIYS…VGLL).

Belongs to the ATPase C chain family. As to quaternary structure, F-type ATPases have 2 components, F(1) - the catalytic core - and F(0) - the membrane sodium channel. F(1) has five subunits: alpha(3), beta(3), gamma(1), delta(1), epsilon(1). F(0) has three main subunits: a(1), b(2) and c(10-14). The alpha and beta chains form an alternating ring which encloses part of the gamma chain. F(1) is attached to F(0) by a central stalk formed by the gamma and epsilon chains, while a peripheral stalk is formed by the delta and b chains.

The protein localises to the cell membrane. Its function is as follows. F(1)F(0) ATP synthase produces ATP from ADP in the presence of a proton or sodium gradient. F-type ATPases consist of two structural domains, F(1) containing the extramembraneous catalytic core and F(0) containing the membrane sodium channel, linked together by a central stalk and a peripheral stalk. During catalysis, ATP synthesis in the catalytic domain of F(1) is coupled via a rotary mechanism of the central stalk subunits to sodium translocation. Functionally, key component of the F(0) channel; it plays a direct role in translocation across the membrane. A homomeric c-ring of between 10-14 subunits forms the central stalk rotor element with the F(1) delta and epsilon subunits. The polypeptide is ATP synthase subunit c, sodium ion specific (atpE) (Propionigenium modestum).